The primary structure comprises 124 residues: Small ribosomal subunit protein uS12 (124 aa).

Position 89 is a 3-methylthioaspartic acid (Asp89).

The protein belongs to the universal ribosomal protein uS12 family. In terms of assembly, part of the 30S ribosomal subunit. Contacts proteins S8 and S17. May interact with IF1 in the 30S initiation complex.

With S4 and S5 plays an important role in translational accuracy. Functionally, interacts with and stabilizes bases of the 16S rRNA that are involved in tRNA selection in the A site and with the mRNA backbone. Located at the interface of the 30S and 50S subunits, it traverses the body of the 30S subunit contacting proteins on the other side and probably holding the rRNA structure together. The combined cluster of proteins S8, S12 and S17 appears to hold together the shoulder and platform of the 30S subunit. The chain is Small ribosomal subunit protein uS12 from Photobacterium profundum (strain SS9).